The chain runs to 266 residues: 3-methyl-2-oxobutanoate hydroxymethyltransferase (266 aa).

Positions 45 and 84 each coordinate Mg(2+). 3-methyl-2-oxobutanoate is bound by residues 45 to 46 (DS), D84, and K112. E114 contacts Mg(2+). E181 (proton acceptor) is an active-site residue.

It belongs to the PanB family. As to quaternary structure, homodecamer; pentamer of dimers. Mg(2+) is required as a cofactor.

The protein resides in the cytoplasm. It catalyses the reaction 3-methyl-2-oxobutanoate + (6R)-5,10-methylene-5,6,7,8-tetrahydrofolate + H2O = 2-dehydropantoate + (6S)-5,6,7,8-tetrahydrofolate. It functions in the pathway cofactor biosynthesis; (R)-pantothenate biosynthesis; (R)-pantoate from 3-methyl-2-oxobutanoate: step 1/2. Functionally, catalyzes the reversible reaction in which hydroxymethyl group from 5,10-methylenetetrahydrofolate is transferred onto alpha-ketoisovalerate to form ketopantoate. The chain is 3-methyl-2-oxobutanoate hydroxymethyltransferase from Pseudomonas savastanoi pv. phaseolicola (strain 1448A / Race 6) (Pseudomonas syringae pv. phaseolicola (strain 1448A / Race 6)).